Reading from the N-terminus, the 440-residue chain is L-seryl-tRNA(Sec) selenium transferase (440 aa).

Lys-282 is modified (N6-(pyridoxal phosphate)lysine).

This sequence belongs to the SelA family. Pyridoxal 5'-phosphate is required as a cofactor.

It is found in the cytoplasm. It carries out the reaction L-seryl-tRNA(Sec) + selenophosphate + H(+) = L-selenocysteinyl-tRNA(Sec) + phosphate. It functions in the pathway aminoacyl-tRNA biosynthesis; selenocysteinyl-tRNA(Sec) biosynthesis; selenocysteinyl-tRNA(Sec) from L-seryl-tRNA(Sec) (bacterial route): step 1/1. Converts seryl-tRNA(Sec) to selenocysteinyl-tRNA(Sec) required for selenoprotein biosynthesis. The chain is L-seryl-tRNA(Sec) selenium transferase from Campylobacter jejuni (strain RM1221).